The primary structure comprises 1366 residues: MTSSKPKKSSRVRKTTKNSKKNHNTMMPLLPKTPPSFKNKVVDKKALKNLVSWAYKTHGTAVTAAMADNLKDLGFKYATQAAVSISVNDLKVPEAKQDLIGQAEAQITATEECYRLGEITEVERHTKVIDTWTETNERLVDAVKNNFNQNDPLNSVWMMANSGARGNMSQVRQLVGMRGLMANPQGEIIDLPIRTNFREGLTVTEYVISSYGARKGLVDTALRTADSGYLTRRLVDVAQDVIVREEDCGTERSIVINSEDGKFGSRLIGRLSAEDILDSEGNLIVPKNTAIDPSLSKTLETSLISKVNIRSPLTCEANRSVCRKCYGWALAHNHLVDLGEAVGIIAAQSIGEPGTQLTMRTFHTGGVSTAESGVVRSKIKGKVEFGSKAKIRGYRTPHGVEAKQAEVDFLLKIIPTGSITNKAQKIEVTSGSLLFVEDGQDIDSDITVAQITSGAVKKSVEKATKDVICDLAGEVRYDKVIQPKEVTDRQGNITLKAQRLGRLWVLAGDVYNLPPNAKPVVSTETKVEQGTVLAEASQSSEFGGEVRLRESVGDSREVQIVTTSMLLSNFKLIEESTHSGELFHLESNDGTIYRLNTSPGSKISSGEVIADLADERFRTKTGGLVKYAPGLSVKKARSSKNGFEVSQGGTLLWIPQETHEINKDISLLMTEDMEWIEAGTEVVKDIFSQTSGIVTVTQKNDILREITVRNGSFHECEDEEILSRFTEEGKLVNPGEKIIDGVDNDEILFVQKLETSKGKGLLLRTVEEYTIPNEAELPELSHVKQEKGPSLALKAIQRLSYKDGELIKSVEGVELLKTNLSIESFDATPQMTIDVETIQDKSDKSINRLNLVILESILVRRDTISDSSHGSTHTELQINNNQLVKAGDVIATTQILCKERGVLQLPDSVEGEPIRRLIVERNEDKIKINIKDKAVVKTGDRVVDGDLISKGVKSTSCGEIEEVSSEYVILRIGRPYMVSPDSVLHVKDGDLVLRGDGLALLVFERQKTGDIVQGLPRIEELLEARRPRDSSILCKKSGVVQIKEGTDEESVSLSVIERDDSISEYQLLMGQNIMVSDGQQVTGGELLTDGPINPHDLLDCLFTDLKDQKPLMEAAQESISKLQRKMVNEVQNVYKSQGVAISDKHIEVIVRQMTSKVRIEDAGDTTLLPGELIELRQVEDTNQAMSITGGAPAEFTPVLLGITKASLNTDSFISAASFQETTRVLTEAAIEGKSDWLRGLKENVIIGRLIPAGTGFSGFVEELASEAGPHPDILAEESGGYRRTQNLRPDYTVDMPQTPIVSSTAILDDPSDEDLETTRNRHGIDPTSSNFAAFARPNAENQFSEDQLPDPAALEGLQEEGLLSDG.

Residues 1-23 (MTSSKPKKSSRVRKTTKNSKKNH) show a composition bias toward basic residues. The tract at residues 1–37 (MTSSKPKKSSRVRKTTKNSKKNHNTMMPLLPKTPPSF) is disordered. Residues cysteine 248, cysteine 315, cysteine 322, and cysteine 325 each coordinate Zn(2+). The tract at residues 1304–1366 (TAILDDPSDE…LQEEGLLSDG (63 aa)) is disordered. Over residues 1354–1366 (LEGLQEEGLLSDG) the composition is skewed to low complexity.

This sequence belongs to the RNA polymerase beta' chain family. RpoC2 subfamily. In cyanobacteria the RNAP catalytic core is composed of 2 alpha, 1 beta, 1 beta', 1 gamma and 1 omega subunit. When a sigma factor is associated with the core the holoenzyme is formed, which can initiate transcription. Requires Zn(2+) as cofactor.

The enzyme catalyses RNA(n) + a ribonucleoside 5'-triphosphate = RNA(n+1) + diphosphate. DNA-dependent RNA polymerase catalyzes the transcription of DNA into RNA using the four ribonucleoside triphosphates as substrates. The chain is DNA-directed RNA polymerase subunit beta' from Prochlorococcus marinus subsp. pastoris (strain CCMP1986 / NIES-2087 / MED4).